We begin with the raw amino-acid sequence, 894 residues long: UPF0182 protein GSU2333 (894 aa).

7 helical membrane passes run 6 to 26, 50 to 70, 98 to 118, 162 to 182, 203 to 223, 250 to 270, and 275 to 295; these read FLLI…LITF, VGAG…NLYF, MVQM…LLAG, KGFV…VYFF, LAIL…LDAV, ILTL…WKGA, and LIPP…YPAM.

It belongs to the UPF0182 family.

The protein resides in the cell membrane. The protein is UPF0182 protein GSU2333 of Geobacter sulfurreducens (strain ATCC 51573 / DSM 12127 / PCA).